We begin with the raw amino-acid sequence, 345 residues long: Probable dual-specificity RNA methyltransferase RlmN (345 aa).

The Proton acceptor role is filled by Glu-93. A Radical SAM core domain is found at Asp-99–Asp-326. Cys-106 and Cys-331 are oxidised to a cystine. Residues Cys-113, Cys-117, and Cys-120 each contribute to the [4Fe-4S] cluster site. Residues Gly-158–Glu-159, Ser-190, Ser-212–His-214, and His-288 each bind S-adenosyl-L-methionine. Cys-331 serves as the catalytic S-methylcysteine intermediate.

Belongs to the radical SAM superfamily. RlmN family. [4Fe-4S] cluster serves as cofactor.

The protein localises to the cytoplasm. The catalysed reaction is adenosine(2503) in 23S rRNA + 2 reduced [2Fe-2S]-[ferredoxin] + 2 S-adenosyl-L-methionine = 2-methyladenosine(2503) in 23S rRNA + 5'-deoxyadenosine + L-methionine + 2 oxidized [2Fe-2S]-[ferredoxin] + S-adenosyl-L-homocysteine. It catalyses the reaction adenosine(37) in tRNA + 2 reduced [2Fe-2S]-[ferredoxin] + 2 S-adenosyl-L-methionine = 2-methyladenosine(37) in tRNA + 5'-deoxyadenosine + L-methionine + 2 oxidized [2Fe-2S]-[ferredoxin] + S-adenosyl-L-homocysteine. Functionally, specifically methylates position 2 of adenine 2503 in 23S rRNA and position 2 of adenine 37 in tRNAs. This is Probable dual-specificity RNA methyltransferase RlmN from Bacteroides thetaiotaomicron (strain ATCC 29148 / DSM 2079 / JCM 5827 / CCUG 10774 / NCTC 10582 / VPI-5482 / E50).